The sequence spans 371 residues: uncharacterized protein (371 aa).

Helical transmembrane passes span 9 to 29, 58 to 78, 98 to 118, 133 to 153, 159 to 179, 183 to 203, and 330 to 350; these read FTLD…VFLI, VLAF…FLAI, LIVA…SFIF, LAPF…VSVI, YDVN…ALAA, ISNF…IGDW, and IIEI…MVVV.

It belongs to the MscS (TC 1.A.23) family.

Its subcellular location is the cell membrane. Its function is as follows. May play a role in resistance to osmotic downshock. This is an uncharacterized protein from Bacillus subtilis (strain 168).